The sequence spans 1374 residues: F-actin-uncapping protein LRRC16A (1374 aa).

Position 1 is an N-acetylmethionine (methionine 1). Serine 122 bears the Phosphoserine mark. LRR repeat units lie at residues 245-269, 275-298, 304-327, 336-363, 391-418, 423-447, 485-510, 547-570, 574-597, and 658-682; these read SNRL…LAGA, NSGL…SLSI, PKGL…SLCQ, ASTL…FLAQ, LQCL…SFKQ, SLAL…LLLG, IHNI…VWLS, DSPL…IINA, NTSL…MLAK, and LQKI…AYRL. Residues 714–738 adopt a coiled-coil conformation; that stretch reads GDAIQEDLKAAERLMRDAKNSKTLL. Phosphothreonine is present on threonine 920. 2 disordered regions span residues 961 to 982 and 1040 to 1374; these read PFPS…PSEE and KMDC…FIFV. The stretch at 962–985 is one LRR 11 repeat; the sequence is FPSVRQEKRSSGLISELPSEEGRR. Residues 962 to 1084 are inhibits capping activity of CP; the sequence is FPSVRQEKRS…LIKSRSRSER (123 aa). At serine 972 the chain carries Phosphoserine. The segment covering 1040 to 1064 has biased composition (basic and acidic residues); the sequence is KMDCKRSSSRSSDAHELGEGDEKKK. The segment at 1058 to 1092 is necessary for localization at the cell membrane; it reads EGDEKKKRDSRRSGFLNLIKSRSRSERPPTVLMTE. Serine 1096 carries the post-translational modification Phosphoserine. 2 stretches are compositionally biased toward basic and acidic residues: residues 1108-1132 and 1141-1150; these read TTRK…KTPE and EAGRAERSDS. Residues 1191–1204 show a composition bias toward polar residues; sequence VISQDPSSPVSCNT. Residue threonine 1229 is modified to Phosphothreonine. The segment covering 1232-1244 has biased composition (basic and acidic residues); the sequence is KNAKAEPRVDGGC. Over residues 1245–1263 the composition is skewed to low complexity; sequence RSRSSSSMPTSPKPLLQSP. A phosphoserine mark is found at serine 1281, serine 1289, serine 1291, serine 1295, serine 1319, serine 1328, and serine 1335. The span at 1317–1330 shows a compositional bias: low complexity; it reads QNSSQSSPRSFSQE. Basic and acidic residues predominate over residues 1343–1356; it reads QEQKQRSSGKDGHQ. A Phosphoserine modification is found at serine 1363.

This sequence belongs to the CARMIL family. In terms of assembly, homodimer. Interacts (via C-terminus) with heterodimeric capping protein (CP); this interaction uncaps barbed ends capped by CP, enhances barbed-end actin polymerization and promotes lamellipodial formation and cell migration. Interacts with MYO1E. Interacts with TRIO.

Its subcellular location is the cytoplasm. The protein resides in the cytoskeleton. The protein localises to the cell membrane. It is found in the cell projection. It localises to the lamellipodium. Cell membrane-cytoskeleton-associated protein that plays a role in the regulation of actin polymerization at the barbed end of actin filaments. Prevents F-actin heterodimeric capping protein (CP) activity at the leading edges of migrating cells, and hence generates uncapped barbed ends and enhances actin polymerization, however, seems unable to nucleate filaments. Plays a role in lamellipodial protrusion formations and cell migration. In Mus musculus (Mouse), this protein is F-actin-uncapping protein LRRC16A.